A 110-amino-acid polypeptide reads, in one-letter code: Red pigment-concentrating prohormone (110 aa).

An N-terminal signal peptide occupies residues 1–25; the sequence is MVRRTGVTLLVVALVVVALVSSVSA. Q26 is subject to Pyrrolidone carboxylic acid. W33 is subject to Tryptophan amide.

Belongs to the AKH/HRTH/RPCH family.

It is found in the secreted. This hormone adapts the animal to light backgrounds by stimulating concentration of the pigment of its red body-chromatophores. The protein is Red pigment-concentrating prohormone of Carcinus maenas (Common shore crab).